The following is a 346-amino-acid chain: Olfactory receptor 8G5 (346 aa).

At 1–60 (MIIYKQGITFLQKENNNTIHLNTMFFLSPAETHQRMAAENHSFVTKFILVGLTEKSELQL) the chain is on the extracellular side. 2 N-linked (GlcNAc...) asparagine glycosylation sites follow: Asn16 and Asn40. A helical membrane pass occupies residues 61–81 (PLFLVFLGIYVVTVLGNLGMI). Over 82 to 89 (TLIGLSSH) the chain is Cytoplasmic. Residues 90–110 (LHTPMYCFLSSLSFIDFCHST) traverse the membrane as a helical segment. The Extracellular portion of the chain corresponds to 111 to 134 (VITPKMLVNFVTEKNIISYPECMT). A disulfide bond links Cys132 and Cys214. A helical transmembrane segment spans residues 135-155 (QLYFFLVFAIAECHMLAAMAY). The Cytoplasmic portion of the chain corresponds to 156–174 (DGYVAICSPLLYSIIISNK). The helical transmembrane segment at 175 to 195 (ACFSLILVVYVIGLICASAHI) threads the bilayer. Topologically, residues 196-232 (GCMFRVQFCKFDVINHYFCDLISILKLSCSSTYINEL) are extracellular. A helical transmembrane segment spans residues 233 to 252 (LILIFSGINILVPSLTILSS). Residues 253–272 (YIFIIASILRIRYTEGRSKA) are Cytoplasmic-facing. Residues 273–293 (FSTCSSHISAVSVFFGSAAFM) form a helical membrane-spanning segment. Over 294-306 (YLQPSSVSSMDQG) the chain is Extracellular. The chain crosses the membrane as a helical span at residues 307 to 327 (KVSSVFYTIVVPMLNPLIYSL). At 328-346 (RNKDVHVALKKTLGKRTFL) the chain is on the cytoplasmic side.

Belongs to the G-protein coupled receptor 1 family.

It is found in the cell membrane. Functionally, odorant receptor. The sequence is that of Olfactory receptor 8G5 (OR8G5) from Homo sapiens (Human).